A 425-amino-acid polypeptide reads, in one-letter code: Dual-specificity RNA methyltransferase RlmN (425 aa).

Glu-136 acts as the Proton acceptor in catalysis. In terms of domain architecture, Radical SAM core spans 142 to 389; it reads GDDRGTLCVS…VRTPRGRDIL (248 aa). Cysteines 149 and 392 form a disulfide. Cys-156, Cys-160, and Cys-163 together coordinate [4Fe-4S] cluster. Residues 218-219, Ser-250, 272-274, and Asn-349 contribute to the S-adenosyl-L-methionine site; these read GE and SLH. Cys-392 serves as the catalytic S-methylcysteine intermediate.

The protein belongs to the radical SAM superfamily. RlmN family. The cofactor is [4Fe-4S] cluster.

It is found in the cytoplasm. It catalyses the reaction adenosine(2503) in 23S rRNA + 2 reduced [2Fe-2S]-[ferredoxin] + 2 S-adenosyl-L-methionine = 2-methyladenosine(2503) in 23S rRNA + 5'-deoxyadenosine + L-methionine + 2 oxidized [2Fe-2S]-[ferredoxin] + S-adenosyl-L-homocysteine. The catalysed reaction is adenosine(37) in tRNA + 2 reduced [2Fe-2S]-[ferredoxin] + 2 S-adenosyl-L-methionine = 2-methyladenosine(37) in tRNA + 5'-deoxyadenosine + L-methionine + 2 oxidized [2Fe-2S]-[ferredoxin] + S-adenosyl-L-homocysteine. Specifically methylates position 2 of adenine 2503 in 23S rRNA and position 2 of adenine 37 in tRNAs. m2A2503 modification seems to play a crucial role in the proofreading step occurring at the peptidyl transferase center and thus would serve to optimize ribosomal fidelity. In Methylorubrum populi (strain ATCC BAA-705 / NCIMB 13946 / BJ001) (Methylobacterium populi), this protein is Dual-specificity RNA methyltransferase RlmN.